Consider the following 67-residue polypeptide: Alpha-toxin Tf3 (67 aa).

Residues 2–63 (KDGYPVEGDN…EPTKTNGRCK (62 aa)) enclose the LCN-type CS-alpha/beta domain. 4 cysteine pairs are disulfide-bonded: cysteine 12-cysteine 62, cysteine 16-cysteine 38, cysteine 24-cysteine 45, and cysteine 28-cysteine 47. Proline 64 bears the Proline amide mark.

This sequence belongs to the long (4 C-C) scorpion toxin superfamily. Sodium channel inhibitor family. Alpha subfamily. Expressed by the venom gland.

It localises to the secreted. Its function is as follows. Alpha toxins bind voltage-independently at site-3 of sodium channels (Nav) and inhibit the inactivation of the activated channels, thereby blocking neuronal transmission. The protein is Alpha-toxin Tf3 of Tityus fasciolatus (Central Brazilian scorpion).